The primary structure comprises 273 residues: Dermonecrotic toxin LspaSicTox-alphaIA1iii (273 aa).

H5 is a catalytic residue. 2 residues coordinate Mg(2+): E25 and D27. Catalysis depends on H41, which acts as the Nucleophile. Cystine bridges form between C45–C51 and C47–C190. D85 serves as a coordination point for Mg(2+).

The protein belongs to the arthropod phospholipase D family. Class II subfamily. The cofactor is Mg(2+). As to expression, expressed by the venom gland.

It is found in the secreted. It carries out the reaction an N-(acyl)-sphingosylphosphocholine = an N-(acyl)-sphingosyl-1,3-cyclic phosphate + choline. The catalysed reaction is an N-(acyl)-sphingosylphosphoethanolamine = an N-(acyl)-sphingosyl-1,3-cyclic phosphate + ethanolamine. The enzyme catalyses a 1-acyl-sn-glycero-3-phosphocholine = a 1-acyl-sn-glycero-2,3-cyclic phosphate + choline. It catalyses the reaction a 1-acyl-sn-glycero-3-phosphoethanolamine = a 1-acyl-sn-glycero-2,3-cyclic phosphate + ethanolamine. Dermonecrotic toxins cleave the phosphodiester linkage between the phosphate and headgroup of certain phospholipids (sphingolipid and lysolipid substrates), forming an alcohol (often choline) and a cyclic phosphate. This toxin acts on sphingomyelin (SM). It may also act on ceramide phosphoethanolamine (CPE), lysophosphatidylcholine (LPC) and lysophosphatidylethanolamine (LPE), but not on lysophosphatidylserine (LPS), and lysophosphatidylglycerol (LPG). It acts by transphosphatidylation, releasing exclusively cyclic phosphate products as second products. Induces dermonecrosis, hemolysis, increased vascular permeability, edema, inflammatory response, and platelet aggregation. The chain is Dermonecrotic toxin LspaSicTox-alphaIA1iii from Loxosceles spadicea (Recluse spider).